A 237-amino-acid chain; its full sequence is Myb-related protein MYBAS1 (237 aa).

HTH myb-type domains lie at 5 to 57 (REEM…VNYL) and 58 to 112 (HPGL…RKKA). The segment at residues 33 to 57 (WDFVAKVSGLNRTGKSCRLRWVNYL) is a DNA-binding region (H-T-H motif). A Bipartite nuclear localization signal 1 motif is present at residues 62-65 (KHGR). A DNA-binding region (H-T-H motif) is located at residues 85–108 (WSRIARRLPGRTDNEIKNYWRTHM). A Bipartite nuclear localization signal 2 motif is present at residues 109 to 117 (RKKAQERRG).

The protein resides in the nucleus. Functionally, transcription factor. The protein is Myb-related protein MYBAS1 (MYBAS1) of Oryza sativa subsp. japonica (Rice).